We begin with the raw amino-acid sequence, 179 residues long: UPF0227 protein Shewmr4_1727 (179 aa).

It belongs to the UPF0227 family.

The polypeptide is UPF0227 protein Shewmr4_1727 (Shewanella sp. (strain MR-4)).